The chain runs to 125 residues: MACPSLACCLLGLLALTSACYIQNCPLGGKRAALDLDMRKCLPCGPGGKGRCFGPSICCADELGCFVGTAEALRCQEENYLPSPCQSGQKPCGSGGRCATAGICCSPDGCRTDPACDPESAFSER.

The N-terminal stretch at Met-1–Ala-19 is a signal peptide. An intrachain disulfide couples Cys-20 to Cys-25. A Glycine amide modification is found at Gly-28. 7 disulfides stabilise this stretch: Cys-41–Cys-85, Cys-44–Cys-58, Cys-52–Cys-75, Cys-59–Cys-65, Cys-92–Cys-104, Cys-98–Cys-116, and Cys-105–Cys-110.

The protein belongs to the vasopressin/oxytocin family. As to quaternary structure, interacts with oxytocin receptor (Ki=1.5 nM). Interacts with vasopressin V1aR/AVPR1A (Ki=37 nM), V1bR/AVPR1B (Ki=222 nM), and V2R/AVPR2 receptors (Ki=823 nM).

Functionally, neurophysin 1 specifically binds oxytocin. Oxytocin causes contraction of the smooth muscle of the uterus and of the mammary gland. Acts by binding to oxytocin receptor (OXTR). This chain is Oxytocin-neurophysin 1 (Oxt), found in Rattus norvegicus (Rat).